We begin with the raw amino-acid sequence, 262 residues long: Ribonuclease 3 (262 aa).

An RNase III domain is found at 18–141; the sequence is LATFLKNLDI…LVGAIYEDMG (124 aa). Glu59 is a binding site for Mg(2+). The active site involves Asp63. Mg(2+)-binding residues include Asp127 and Glu130. Glu130 is an active-site residue.

This sequence belongs to the ribonuclease III family. As to quaternary structure, homodimer. Requires Mg(2+) as cofactor.

It localises to the cytoplasm. The catalysed reaction is Endonucleolytic cleavage to 5'-phosphomonoester.. Functionally, digests double-stranded RNA. Involved in the processing of primary rRNA transcript to yield the immediate precursors to the large and small rRNAs (23S and 16S). Processes some mRNAs, and tRNAs when they are encoded in the rRNA operon. Processes pre-crRNA and tracrRNA of type II CRISPR loci if present in the organism. In Mycoplasma genitalium (strain ATCC 33530 / DSM 19775 / NCTC 10195 / G37) (Mycoplasmoides genitalium), this protein is Ribonuclease 3.